The primary structure comprises 90 residues: Probable Fe(2+)-trafficking protein (90 aa).

The protein belongs to the Fe(2+)-trafficking protein family. Monomer.

Its function is as follows. Could be a mediator in iron transactions between iron acquisition and iron-requiring processes, such as synthesis and/or repair of Fe-S clusters in biosynthetic enzymes. This is Probable Fe(2+)-trafficking protein from Proteus mirabilis (strain HI4320).